Here is a 423-residue protein sequence, read N- to C-terminus: Protein CLP1 homolog (423 aa).

ATP is bound by residues Glu-19, Lys-60, and 122-127 (DVGKTT).

It belongs to the Clp1 family. Clp1 subfamily.

The protein resides in the nucleus. In terms of biological role, required for endonucleolytic cleavage during polyadenylation-dependent pre-mRNA 3'-end formation. The chain is Protein CLP1 homolog (cbc) from Anopheles gambiae (African malaria mosquito).